Here is a 124-residue protein sequence, read N- to C-terminus: Ribonuclease pancreatic (124 aa).

Over residues 1–13 the composition is skewed to basic and acidic residues; sequence KETSAQKFERQHM. The tract at residues 1 to 25 is disordered; the sequence is KETSAQKFERQHMDSTGSSSSSPTY. Positions 7 and 10 each coordinate substrate. Catalysis depends on histidine 12, which acts as the Proton acceptor. 4 disulfide bridges follow: cysteine 26-cysteine 84, cysteine 40-cysteine 95, cysteine 58-cysteine 110, and cysteine 65-cysteine 72. Residues 41 to 45, lysine 66, and arginine 85 each bind substrate; that span reads KPVNT. The Proton donor role is filled by histidine 119.

The protein belongs to the pancreatic ribonuclease family. Monomer. Interacts with and forms tight 1:1 complexes with RNH1. Dimerization of two such complexes may occur. Interaction with RNH1 inhibits this protein. As to expression, pancreas.

Its subcellular location is the secreted. The enzyme catalyses an [RNA] containing cytidine + H2O = an [RNA]-3'-cytidine-3'-phosphate + a 5'-hydroxy-ribonucleotide-3'-[RNA].. It catalyses the reaction an [RNA] containing uridine + H2O = an [RNA]-3'-uridine-3'-phosphate + a 5'-hydroxy-ribonucleotide-3'-[RNA].. Functionally, endonuclease that catalyzes the cleavage of RNA on the 3' side of pyrimidine nucleotides. Acts on single-stranded and double-stranded RNA. The sequence is that of Ribonuclease pancreatic (RNASE1) from Ondatra zibethicus (Muskrat).